The sequence spans 439 residues: Sorting nexin-31 (439 aa).

The PX domain occupies 1-109; that stretch reads MKMHFCIPVS…EFLTLVQLHT (109 aa). Residues 384 to 409 are disordered; the sequence is TEQSPEMQIEVPEQGRSKKHPSQPSQ.

This sequence belongs to the sorting nexin family. Interacts with CCDC22, CCDC93, VPS26C and VPS35L, associates with the retriever and CCC complexes.

Functionally, may be involved in protein trafficking. This is Sorting nexin-31 (Snx31) from Mus musculus (Mouse).